The chain runs to 830 residues: Leucine--tRNA ligase (830 aa).

Positions 34–44 (PYPSGNIHMGH) match the 'HIGH' region motif. Residues 592–596 (KMSKS) carry the 'KMSKS' region motif. ATP is bound at residue Lys595.

It belongs to the class-I aminoacyl-tRNA synthetase family.

It is found in the cytoplasm. The enzyme catalyses tRNA(Leu) + L-leucine + ATP = L-leucyl-tRNA(Leu) + AMP + diphosphate. The sequence is that of Leucine--tRNA ligase from Ehrlichia ruminantium (strain Welgevonden).